The following is a 217-amino-acid chain: Small ribosomal subunit protein uS3c (217 aa).

In terms of domain architecture, KH type-2 spans 47–118; it reads IQKHVKSVSN…NLRVTLTGVI (72 aa).

It belongs to the universal ribosomal protein uS3 family. As to quaternary structure, part of the 30S ribosomal subunit.

The protein resides in the plastid. It localises to the chloroplast. This chain is Small ribosomal subunit protein uS3c (rps3), found in Adiantum capillus-veneris (Maidenhair fern).